The following is a 272-amino-acid chain: Iodotyrosine deiodinase (272 aa).

A helical transmembrane segment spans residues 5–25; it reads LSGVSYGLLAGILAMLIHLVY. FMN-binding positions include 82–86, Ser110, and 110–111; these read RRSVR and SG. Residues Ala112, Glu139, Tyr143, and Lys164 each contribute to the 3-iodo-L-tyrosine site. Residues 219-221 and Arg261 contribute to the FMN site; that span reads TST.

It belongs to the nitroreductase family. FMN serves as cofactor.

The protein localises to the membrane. It carries out the reaction 2 iodide + L-tyrosine + 2 NADP(+) = 3,5-diiodo-L-tyrosine + 2 NADPH + H(+). The catalysed reaction is iodide + L-tyrosine + NADP(+) = 3-iodo-L-tyrosine + NADPH. It catalyses the reaction 3-iodo-L-tyrosine + iodide + NADP(+) = 3,5-diiodo-L-tyrosine + NADPH + H(+). The enzyme catalyses L-tyrosine + chloride + NADP(+) = 3-chloro-L-tyrosine + NADPH. It carries out the reaction bromide + L-tyrosine + NADP(+) = 3-bromo-L-tyrosine + NADPH. Its function is as follows. Catalyzes the dehalogenation of halotyrosines such as 3,5-diiodo-L-tyrosine. Likely to also catalyze the dehalogenation of other halotyrosines such as 3-bromo-L-tyrosine, 3-chloro-L-tyrosine and 3-iodo-L-tyrosine. The sequence is that of Iodotyrosine deiodinase from Hydra vulgaris (Hydra).